A 327-amino-acid chain; its full sequence is Probable serine/threonine-protein kinase WNK5 (327 aa).

The segment at M1–V48 is disordered. Residues R9–T19 show a composition bias toward low complexity. Positions G39 to V48 are enriched in acidic residues. A Protein kinase domain is found at G55–F314. ATP is bound at residue T136–C139. The Proton acceptor role is filled by D203.

Belongs to the protein kinase superfamily. Ser/Thr protein kinase family. WNK subfamily.

It carries out the reaction L-seryl-[protein] + ATP = O-phospho-L-seryl-[protein] + ADP + H(+). It catalyses the reaction L-threonyl-[protein] + ATP = O-phospho-L-threonyl-[protein] + ADP + H(+). In Oryza sativa subsp. japonica (Rice), this protein is Probable serine/threonine-protein kinase WNK5 (WNK5).